Reading from the N-terminus, the 91-residue chain is Small ribosomal subunit protein bS20 (91 aa).

A disordered region spans residues M1–R25. Over residues A7 to H20 the composition is skewed to basic residues.

It belongs to the bacterial ribosomal protein bS20 family.

Functionally, binds directly to 16S ribosomal RNA. This is Small ribosomal subunit protein bS20 from Azotobacter vinelandii (strain DJ / ATCC BAA-1303).